Here is a 421-residue protein sequence, read N- to C-terminus: 4-hydroxy-3-methylbut-2-en-1-yl diphosphate synthase (flavodoxin) (421 aa).

A disordered region spans residues M1–R20. [4Fe-4S] cluster is bound by residues C311, C314, C357, and E364.

Belongs to the IspG family. Requires [4Fe-4S] cluster as cofactor.

The catalysed reaction is (2E)-4-hydroxy-3-methylbut-2-enyl diphosphate + oxidized [flavodoxin] + H2O + 2 H(+) = 2-C-methyl-D-erythritol 2,4-cyclic diphosphate + reduced [flavodoxin]. It participates in isoprenoid biosynthesis; isopentenyl diphosphate biosynthesis via DXP pathway; isopentenyl diphosphate from 1-deoxy-D-xylulose 5-phosphate: step 5/6. In terms of biological role, converts 2C-methyl-D-erythritol 2,4-cyclodiphosphate (ME-2,4cPP) into 1-hydroxy-2-methyl-2-(E)-butenyl 4-diphosphate. In Stenotrophomonas maltophilia (strain R551-3), this protein is 4-hydroxy-3-methylbut-2-en-1-yl diphosphate synthase (flavodoxin).